The sequence spans 163 residues: Crossover junction endodeoxyribonuclease RuvC (163 aa).

Residues Asp4, Glu65, and Asp138 contribute to the active site. Asp4, Glu65, and Asp138 together coordinate Mg(2+).

This sequence belongs to the RuvC family. Homodimer which binds Holliday junction (HJ) DNA. The HJ becomes 2-fold symmetrical on binding to RuvC with unstacked arms; it has a different conformation from HJ DNA in complex with RuvA. In the full resolvosome a probable DNA-RuvA(4)-RuvB(12)-RuvC(2) complex forms which resolves the HJ. Mg(2+) serves as cofactor.

It is found in the cytoplasm. The enzyme catalyses Endonucleolytic cleavage at a junction such as a reciprocal single-stranded crossover between two homologous DNA duplexes (Holliday junction).. Functionally, the RuvA-RuvB-RuvC complex processes Holliday junction (HJ) DNA during genetic recombination and DNA repair. Endonuclease that resolves HJ intermediates. Cleaves cruciform DNA by making single-stranded nicks across the HJ at symmetrical positions within the homologous arms, yielding a 5'-phosphate and a 3'-hydroxyl group; requires a central core of homology in the junction. The consensus cleavage sequence is 5'-(A/T)TT(C/G)-3'. Cleavage occurs on the 3'-side of the TT dinucleotide at the point of strand exchange. HJ branch migration catalyzed by RuvA-RuvB allows RuvC to scan DNA until it finds its consensus sequence, where it cleaves and resolves the cruciform DNA. This Corynebacterium diphtheriae (strain ATCC 700971 / NCTC 13129 / Biotype gravis) protein is Crossover junction endodeoxyribonuclease RuvC.